The sequence spans 243 residues: UPF0758 protein AM1_4368 (243 aa).

The 123-residue stretch at 113-235 (VIDDPAVAAA…FTSLRQTTSL (123 aa)) folds into the MPN domain. Positions 184, 186, and 197 each coordinate Zn(2+). A JAMM motif motif is present at residues 184–197 (HNHPSGQTDPSPED).

This sequence belongs to the UPF0758 family.

In Acaryochloris marina (strain MBIC 11017), this protein is UPF0758 protein AM1_4368.